Here is a 397-residue protein sequence, read N- to C-terminus: Acetate kinase 2 (397 aa).

N8 contributes to the Mg(2+) binding site. Residue K15 coordinates ATP. Substrate is bound at residue R89. D146 (proton donor/acceptor) is an active-site residue. ATP is bound by residues 206–210 (HLGNG), 281–283 (DLR), and 329–333 (GIGEN). E382 is a binding site for Mg(2+).

This sequence belongs to the acetokinase family. As to quaternary structure, homodimer. Mg(2+) serves as cofactor. The cofactor is Mn(2+).

It is found in the cytoplasm. The catalysed reaction is acetate + ATP = acetyl phosphate + ADP. The protein operates within metabolic intermediate biosynthesis; acetyl-CoA biosynthesis; acetyl-CoA from acetate: step 1/2. In terms of biological role, catalyzes the formation of acetyl phosphate from acetate and ATP. Can also catalyze the reverse reaction. The protein is Acetate kinase 2 of Listeria monocytogenes serotype 4b (strain F2365).